Consider the following 204-residue polypeptide: uncharacterized protein (204 aa).

Residues 77–111 (APHGSRIPGRCRRSPRCSRRPGGSRLRGGTWTPRL) form a disordered region. Over residues 85–95 (GRCRRSPRCSR) the composition is skewed to basic residues. A compositionally biased stretch (low complexity) spans 96–105 (RPGGSRLRGG).

This is an uncharacterized protein from Homo sapiens (Human).